The chain runs to 119 residues: Holo-[acyl-carrier-protein] synthase (119 aa).

Mg(2+) contacts are provided by D8 and E58.

It belongs to the P-Pant transferase superfamily. AcpS family. The cofactor is Mg(2+).

The protein localises to the cytoplasm. It carries out the reaction apo-[ACP] + CoA = holo-[ACP] + adenosine 3',5'-bisphosphate + H(+). Transfers the 4'-phosphopantetheine moiety from coenzyme A to a Ser of acyl-carrier-protein. The chain is Holo-[acyl-carrier-protein] synthase from Bacillus cereus (strain ATCC 14579 / DSM 31 / CCUG 7414 / JCM 2152 / NBRC 15305 / NCIMB 9373 / NCTC 2599 / NRRL B-3711).